A 483-amino-acid chain; its full sequence is Probable Xaa-Pro aminopeptidase MCYG_06503 (483 aa).

Aspartate 233, aspartate 244, glutamate 409, and glutamate 453 together coordinate Mn(2+).

The protein belongs to the peptidase M24B family. Mn(2+) serves as cofactor.

It catalyses the reaction Release of any N-terminal amino acid, including proline, that is linked to proline, even from a dipeptide or tripeptide.. Functionally, catalyzes the removal of a penultimate prolyl residue from the N-termini of peptides. The protein is Probable Xaa-Pro aminopeptidase MCYG_06503 of Arthroderma otae (strain ATCC MYA-4605 / CBS 113480) (Microsporum canis).